The following is a 485-amino-acid chain: Glutamyl-tRNA(Gln) amidotransferase subunit A (485 aa).

Residues Lys-78 and Ser-153 each act as charge relay system in the active site. Ser-177 acts as the Acyl-ester intermediate in catalysis.

The protein belongs to the amidase family. GatA subfamily. In terms of assembly, heterotrimer of A, B and C subunits.

It catalyses the reaction L-glutamyl-tRNA(Gln) + L-glutamine + ATP + H2O = L-glutaminyl-tRNA(Gln) + L-glutamate + ADP + phosphate + H(+). Allows the formation of correctly charged Gln-tRNA(Gln) through the transamidation of misacylated Glu-tRNA(Gln) in organisms which lack glutaminyl-tRNA synthetase. The reaction takes place in the presence of glutamine and ATP through an activated gamma-phospho-Glu-tRNA(Gln). The sequence is that of Glutamyl-tRNA(Gln) amidotransferase subunit A from Bacillus cereus (strain ATCC 10987 / NRS 248).